The following is a 159-amino-acid chain: Major latex protein 149 (159 aa).

It belongs to the MLP family. In terms of tissue distribution, laticifer.

The protein localises to the vacuole. Its subcellular location is the cytoplasmic vesicle. In terms of biological role, not known; MLPs constitute up to 50% of the soluble latex protein. The protein is Major latex protein 149 (MLP149) of Papaver somniferum (Opium poppy).